The primary structure comprises 173 residues: NADH-quinone oxidoreductase subunit B (173 aa).

C52, C53, C117, and C147 together coordinate [4Fe-4S] cluster.

It belongs to the complex I 20 kDa subunit family. As to quaternary structure, NDH-1 is composed of 14 different subunits. Subunits NuoB, C, D, E, F, and G constitute the peripheral sector of the complex. It depends on [4Fe-4S] cluster as a cofactor.

The protein localises to the cell inner membrane. It carries out the reaction a quinone + NADH + 5 H(+)(in) = a quinol + NAD(+) + 4 H(+)(out). In terms of biological role, NDH-1 shuttles electrons from NADH, via FMN and iron-sulfur (Fe-S) centers, to quinones in the respiratory chain. Couples the redox reaction to proton translocation (for every two electrons transferred, four hydrogen ions are translocated across the cytoplasmic membrane), and thus conserves the redox energy in a proton gradient. The protein is NADH-quinone oxidoreductase subunit B of Pelagibacter ubique (strain HTCC1062).